A 657-amino-acid polypeptide reads, in one-letter code: 1-deoxy-D-xylulose-5-phosphate synthase (657 aa).

Residues histidine 73 and 113–115 (SHA) contribute to the thiamine diphosphate site. Aspartate 145 serves as a coordination point for Mg(2+). Thiamine diphosphate contacts are provided by residues 146–147 (GA), asparagine 175, tyrosine 293, and glutamate 375. A Mg(2+)-binding site is contributed by asparagine 175.

It belongs to the transketolase family. DXPS subfamily. As to quaternary structure, homodimer. Mg(2+) serves as cofactor. Thiamine diphosphate is required as a cofactor.

The enzyme catalyses D-glyceraldehyde 3-phosphate + pyruvate + H(+) = 1-deoxy-D-xylulose 5-phosphate + CO2. It functions in the pathway metabolic intermediate biosynthesis; 1-deoxy-D-xylulose 5-phosphate biosynthesis; 1-deoxy-D-xylulose 5-phosphate from D-glyceraldehyde 3-phosphate and pyruvate: step 1/1. Its function is as follows. Catalyzes the acyloin condensation reaction between C atoms 2 and 3 of pyruvate and glyceraldehyde 3-phosphate to yield 1-deoxy-D-xylulose-5-phosphate (DXP). The protein is 1-deoxy-D-xylulose-5-phosphate synthase of Pseudarthrobacter chlorophenolicus (strain ATCC 700700 / DSM 12829 / CIP 107037 / JCM 12360 / KCTC 9906 / NCIMB 13794 / A6) (Arthrobacter chlorophenolicus).